The chain runs to 205 residues: Imidazoleglycerol-phosphate dehydratase (205 aa).

This sequence belongs to the imidazoleglycerol-phosphate dehydratase family.

The enzyme catalyses D-erythro-1-(imidazol-4-yl)glycerol 3-phosphate = 3-(imidazol-4-yl)-2-oxopropyl phosphate + H2O. The protein operates within amino-acid biosynthesis; L-histidine biosynthesis; L-histidine from 5-phospho-alpha-D-ribose 1-diphosphate: step 6/9. The polypeptide is Imidazoleglycerol-phosphate dehydratase (HIS3) (Phaffia rhodozyma (Yeast)).